We begin with the raw amino-acid sequence, 280 residues long: BURP domain protein USPL1 (280 aa).

The N-terminal stretch at 1–24 (MASTFRLSISFLTLILFSLWVVEA) is a signal peptide. The BURP domain maps to 58–280 (YFTLNDLKLG…PLDNIVWVTK (223 aa)).

Expressed in cotyledons, radicle, floral buds, open flowers, roots and developing seeds, but not in leaves. Highly expressed in the root tips. Detected in young leaves, hypocotyls, stems and mature seed funiculum.

The protein resides in the protein storage vacuole. Its subcellular location is the golgi apparatus. It localises to the golgi stack. The protein localises to the trans-Golgi network. It is found in the prevacuolar compartment. Associated with the protein storage vacuole formation. The protein is BURP domain protein USPL1 of Arabidopsis thaliana (Mouse-ear cress).